We begin with the raw amino-acid sequence, 748 residues long: QGAGAAAAAAGGAGQGGYGGLGGQGAGQGGYGGLGGQGAGQGAGAAAAAAAGGAGQGGYGGLGSQGAGRGGQGAGAAAAAAGGAGQGGYGGLGSQGAGRGGLGGQGAGAAAAAAAGGAGQGGYGGLGNQGAGRGGQGAAAAAAGGAGQGGYGGLGSQGAGRGGLGGQGAGAAAAAAGGAGQGGYGGLGGQGAGQGGYGGLGSQGAGRGGLGGQGAGAAAAAAAGGAGQGGLGGQGAGQGAGASAAAAGGAGQGGYGGLGSQGAGRGGEGAGAAAAAAGGAGQGGYGGLGGQGAGQGGYGGLGSQGAGRGGLGGQGAGAAAAGGAGQGGLGGQGAGQGAGAAAAAAGGAGQGGYGGLGSQGAGRGGLGGQGAGAVAAAAAGGAGQGGYGGLGSQGAGRGGQGAGAAAAAAGGAGQRGYGGLGNQGAGRGGLGGQGAGAAAAAAAGGAGQGGYGGLGNQGAGRGGQGAAAAAGGAGQGGYGGLGSQGAGRGGQGAGAAAAAAVGAGQEGIRGQGAGQGGYGGLGSQGSGRGGLGGQGAGAAAAAAGGAGQGGLGGQGAGQGAGAAAAAAGGVRQGGYGGLGSQGAGRGGQGAGAAAAAAGGAGQGGYGGLGGQGVGRGGLGGQGAGAAAAGGAGQGGYGGVGSGASAASAAASRLSSPQASSRVSSAVSNLVASGPTNSAALSSTISNVVSQIGASNPGLSGCDVLIQALLEVVSALIQILGSSSIGQVNYGSAGQATQIVGQSVYQALG.

25 tandem repeats follow at residues 1–25 (QGAG…GGQG), 26–38 (AGQG…GGQG), 39–66 (AGQG…GSQG), 67–96 (AGRG…GSQG), 97–130 (AGRG…GNQG), 131–158 (AGRG…GSQG), 159–191 (AGRG…GGQG), 192–204 (AGQG…GSQG), 205–235 (AGRG…GGQG), 236–262 (AGQG…GSQG), 263–292 (AGRG…GGQG), 293–305 (AGQG…GSQG), 306–333 (AGRG…GGQG), 334–360 (AGQG…GSQG), 361–394 (AGRG…GSQG), 395–424 (AGRG…GNQG), 425–458 (AGRG…GNQG), 459–485 (AGRG…GSQG), 486–512 (AGRG…RGQG), 513–525 (AGQG…GSQG), 526–555 (SGRG…GGQG), 556–582 (AGQG…GSQG), 583–612 (AGRG…GGQG), 613–642 (VGRG…VGSG), and 643–655 (ASAA…RLSS). The 25 X approximate tandem repeats stretch occupies residues 1–655 (QGAGAAAAAA…ASAAASRLSS (655 aa)).

This sequence belongs to the silk fibroin family. As to quaternary structure, major subunit, with spidroin 2, of the dragline silk.

The protein localises to the secreted. It is found in the extracellular space. Functionally, spiders' major ampullate silk possesses unique characteristics of strength and elasticity. Fibroin consists of pseudocrystalline regions of antiparallel beta-sheet interspersed with elastic amorphous segments. This is Spidroin-1 from Trichonephila clavipes (Golden silk orbweaver).